Here is a 204-residue protein sequence, read N- to C-terminus: Ribonuclease HII (204 aa).

The RNase H type-2 domain maps to 17-204 (TLIAGVDEVG…KPVKKVLGLL (188 aa)). A divalent metal cation is bound by residues Asp-23, Glu-24, and Asp-115.

Belongs to the RNase HII family. Mn(2+) is required as a cofactor. Mg(2+) serves as cofactor.

Its subcellular location is the cytoplasm. The catalysed reaction is Endonucleolytic cleavage to 5'-phosphomonoester.. In terms of biological role, endonuclease that specifically degrades the RNA of RNA-DNA hybrids. The polypeptide is Ribonuclease HII (Psychromonas ingrahamii (strain DSM 17664 / CCUG 51855 / 37)).